A 303-amino-acid chain; its full sequence is Hemolysin E, chromosomal (303 aa).

The cysteines at positions 87 and 285 are disulfide-linked. Residues Ala-183–Val-203 form a helical membrane-spanning segment.

As to quaternary structure, monomer and oligomer. In periplasm, it is present as a monomer, while in outer membrane vesicles, it oligomerizes to form a pore structure that is active. The pore is formed by a dodecamer. In periplasm, it forms a disulfide bond between Cys-87 and Cys-285, which prevents the oligomerization. In outer membrane vesicles, the redox status prevents formation of the disulfide bond, leading to oligomerization and pore formation.

The protein localises to the secreted. It localises to the periplasm. Its subcellular location is the host cell membrane. Functionally, toxin, which has some hemolytic activity towards mammalian cells. Acts by forming a pore-like structure upon contact with mammalian cells. The chain is Hemolysin E, chromosomal (hlyE) from Escherichia coli (strain K12).